The primary structure comprises 183 residues: Dual-action ribosomal maturation protein DarP (183 aa).

The protein belongs to the DarP family.

It is found in the cytoplasm. Member of a network of 50S ribosomal subunit biogenesis factors which assembles along the 30S-50S interface, preventing incorrect 23S rRNA structures from forming. Promotes peptidyl transferase center (PTC) maturation. The polypeptide is Dual-action ribosomal maturation protein DarP (Salmonella paratyphi A (strain ATCC 9150 / SARB42)).